A 143-amino-acid chain; its full sequence is Peptide methionine sulfoxide reductase MsrB (143 aa).

Residues 16–139 (DAELRRRLTP…NSAALNFESR (124 aa)) enclose the MsrB domain. Residues cysteine 55, cysteine 58, cysteine 104, and cysteine 107 each coordinate Zn(2+). The Nucleophile role is filled by cysteine 128.

The protein belongs to the MsrB Met sulfoxide reductase family. The cofactor is Zn(2+).

The catalysed reaction is L-methionyl-[protein] + [thioredoxin]-disulfide + H2O = L-methionyl-(R)-S-oxide-[protein] + [thioredoxin]-dithiol. The chain is Peptide methionine sulfoxide reductase MsrB from Burkholderia lata (strain ATCC 17760 / DSM 23089 / LMG 22485 / NCIMB 9086 / R18194 / 383).